Here is a 433-residue protein sequence, read N- to C-terminus: Cyclin-dependent kinase 15 (433 aa).

Residues 46–83 form a disordered region; that stretch reads ASSSTASFHPRGLEAASAQKLKSKRPRSNSDSFQEENL. The 285-residue stretch at 52 to 336 folds into the Protein kinase domain; the sequence is SFHPRGLEAA…SKLPNYNPEW (285 aa). ATP is bound by residues 58 to 66 and E81; that span reads LEAASAQKL. T173 (proton acceptor) is an active-site residue.

This sequence belongs to the protein kinase superfamily. CMGC Ser/Thr protein kinase family. CDC2/CDKX subfamily. It depends on Mg(2+) as a cofactor.

It carries out the reaction L-seryl-[protein] + ATP = O-phospho-L-seryl-[protein] + ADP + H(+). It catalyses the reaction L-threonyl-[protein] + ATP = O-phospho-L-threonyl-[protein] + ADP + H(+). In terms of biological role, serine/threonine-protein kinase that acts like an antiapoptotic protein that counters TRAIL/TNFSF10-induced apoptosis by inducing phosphorylation of BIRC5 at 'Thr-34'. The chain is Cyclin-dependent kinase 15 (Cdk15) from Mus musculus (Mouse).